Here is a 233-residue protein sequence, read N- to C-terminus: 5'-methylthioadenosine/S-adenosylhomocysteine nucleosidase (233 aa).

Glu12 acts as the Proton acceptor in catalysis. Substrate contacts are provided by residues Gly78, Ile152, and 173–174 (ME). Asp197 functions as the Proton donor in the catalytic mechanism.

This sequence belongs to the PNP/UDP phosphorylase family. MtnN subfamily. Homodimer.

It catalyses the reaction S-adenosyl-L-homocysteine + H2O = S-(5-deoxy-D-ribos-5-yl)-L-homocysteine + adenine. It carries out the reaction S-methyl-5'-thioadenosine + H2O = 5-(methylsulfanyl)-D-ribose + adenine. The catalysed reaction is 5'-deoxyadenosine + H2O = 5-deoxy-D-ribose + adenine. It participates in amino-acid biosynthesis; L-methionine biosynthesis via salvage pathway; S-methyl-5-thio-alpha-D-ribose 1-phosphate from S-methyl-5'-thioadenosine (hydrolase route): step 1/2. In terms of biological role, catalyzes the irreversible cleavage of the glycosidic bond in both 5'-methylthioadenosine (MTA) and S-adenosylhomocysteine (SAH/AdoHcy) to adenine and the corresponding thioribose, 5'-methylthioribose and S-ribosylhomocysteine, respectively. Also cleaves 5'-deoxyadenosine, a toxic by-product of radical S-adenosylmethionine (SAM) enzymes, into 5-deoxyribose and adenine. Thus, is required for in vivo function of the radical SAM enzymes biotin synthase and lipoic acid synthase, that are inhibited by 5'-deoxyadenosine accumulation. The polypeptide is 5'-methylthioadenosine/S-adenosylhomocysteine nucleosidase (Yersinia pseudotuberculosis serotype O:1b (strain IP 31758)).